A 302-amino-acid chain; its full sequence is MTTSEYGSRRSDDDQWDIVSGVGYTALLVAGWRALDTVGPQPLAPDEYAKYFIAASGDAYLNDQLAHPPTSVDETAFPRLYGVQTRFFDDFFRSAAAGTKQAVIVAAGLDSRAYRLEWPSGTTVFEIDLAQVLEFKARVLQRHGVEPKARRNAVAADLRTDWPATLHAAGFEPGQPSAWSVEGLLPYLTADAQDALFARIDDLCAPGSRIATGALGSRLDHDQLVALEQTHPGVNLFGDVNFSALTYDDKTNPAQWLAARGWVVEPVRNTLELEAGYGMTPPAVDVRLDAIMHSEYIVATKP.

S-adenosyl-L-methionine contacts are provided by residues Asp128 and 157–158 (DL).

Belongs to the UPF0677 family.

In terms of biological role, exhibits S-adenosyl-L-methionine-dependent methyltransferase activity. In Mycobacterium ulcerans (strain Agy99), this protein is Putative S-adenosyl-L-methionine-dependent methyltransferase MUL_2961.